The chain runs to 242 residues: UPF0246 protein SP_1547 (242 aa).

Belongs to the UPF0246 family.

This chain is UPF0246 protein SP_1547, found in Streptococcus pneumoniae serotype 4 (strain ATCC BAA-334 / TIGR4).